Reading from the N-terminus, the 284-residue chain is MELWYTEKHTEDVKFSIRVDRELYTEQSKFQRIDILESKEFGRFFTLDGLMMVTEKDEFIYHDMIVHVPMATNPNIKKVLVIGAGDGGTIRELTRYKTIEKIDMVEIDESVVEACKKYLPKTACKLEEERVNIVYEDGLKFVRNKENDYDLIIVDSTDPFGPGEGLFTKEFYGNCYKALSEDGILVNQHESPYYEYYAKSMKDAHEKIQGLFKINKVYQAHIPTYPSGHWLFGFASKKYDPIKDLNVEAWKSLGIQTKYYNTDLHVGCFALPTYVIDMLNEDKE.

One can recognise a PABS domain in the interval 2–237 (ELWYTEKHTE…GHWLFGFASK (236 aa)). Residue glutamine 31 coordinates S-methyl-5'-thioadenosine. Residues histidine 62 and aspartate 86 each contribute to the spermidine site. S-methyl-5'-thioadenosine contacts are provided by residues glutamate 106 and 137–138 (DG). Catalysis depends on aspartate 155, which acts as the Proton acceptor. 155–158 (DSTD) contributes to the spermidine binding site. S-methyl-5'-thioadenosine is bound at residue proline 162.

The protein belongs to the spermidine/spermine synthase family. As to quaternary structure, homodimer or homotetramer.

The protein resides in the cytoplasm. The catalysed reaction is S-adenosyl 3-(methylsulfanyl)propylamine + putrescine = S-methyl-5'-thioadenosine + spermidine + H(+). It functions in the pathway amine and polyamine biosynthesis; spermidine biosynthesis; spermidine from putrescine: step 1/1. In terms of biological role, catalyzes the irreversible transfer of a propylamine group from the amino donor S-adenosylmethioninamine (decarboxy-AdoMet) to putrescine (1,4-diaminobutane) to yield spermidine. This Clostridium botulinum (strain Alaska E43 / Type E3) protein is Polyamine aminopropyltransferase.